The following is a 282-amino-acid chain: Shikimate dehydrogenase (NADP(+)) (282 aa).

Residues Ser15–Ser17 and Thr62 each bind shikimate. The active-site Proton acceptor is Lys66. The shikimate site is built by Asn87 and Asp103. NADP(+) is bound by residues Gly127 to Ala131, Asn151 to Lys156, and Met220. Shikimate is bound at residue Tyr222. Residue Gly244 participates in NADP(+) binding.

This sequence belongs to the shikimate dehydrogenase family. As to quaternary structure, homodimer.

The catalysed reaction is shikimate + NADP(+) = 3-dehydroshikimate + NADPH + H(+). It functions in the pathway metabolic intermediate biosynthesis; chorismate biosynthesis; chorismate from D-erythrose 4-phosphate and phosphoenolpyruvate: step 4/7. Functionally, involved in the biosynthesis of the chorismate, which leads to the biosynthesis of aromatic amino acids. Catalyzes the reversible NADPH linked reduction of 3-dehydroshikimate (DHSA) to yield shikimate (SA). The polypeptide is Shikimate dehydrogenase (NADP(+)) (Shewanella putrefaciens (strain CN-32 / ATCC BAA-453)).